A 308-amino-acid polypeptide reads, in one-letter code: Cytochrome c biogenesis protein CcsA (308 aa).

7 helical membrane-spanning segments follow: residues 2–22, 44–64, 71–91, 143–163, 212–232, 247–267, and 273–293; these read IVST…SILI, GMLI…IYLG, LSES…IGYF, MILG…LMVI, VISL…VWAN, WAFI…NINL, and AIVA…VNLV.

This sequence belongs to the CcmF/CycK/Ccl1/NrfE/CcsA family. As to quaternary structure, may interact with Ccs1.

Its subcellular location is the plastid membrane. In terms of biological role, required during biogenesis of c-type cytochromes (cytochrome c6 and cytochrome f) at the step of heme attachment. In Cuscuta reflexa (Southern Asian dodder), this protein is Cytochrome c biogenesis protein CcsA.